The chain runs to 467 residues: UDP-N-acetylmuramate--L-alanine ligase (467 aa).

114–120 provides a ligand contact to ATP; it reads GTHGKTT.

The protein belongs to the MurCDEF family.

It localises to the cytoplasm. It catalyses the reaction UDP-N-acetyl-alpha-D-muramate + L-alanine + ATP = UDP-N-acetyl-alpha-D-muramoyl-L-alanine + ADP + phosphate + H(+). Its pathway is cell wall biogenesis; peptidoglycan biosynthesis. In terms of biological role, cell wall formation. This is UDP-N-acetylmuramate--L-alanine ligase from Nitrobacter winogradskyi (strain ATCC 25391 / DSM 10237 / CIP 104748 / NCIMB 11846 / Nb-255).